The primary structure comprises 259 residues: UPF0246 protein PSPA7_1607 (259 aa).

It belongs to the UPF0246 family.

The chain is UPF0246 protein PSPA7_1607 from Pseudomonas paraeruginosa (strain DSM 24068 / PA7) (Pseudomonas aeruginosa (strain PA7)).